We begin with the raw amino-acid sequence, 185 residues long: Large ribosomal subunit protein uL5m (185 aa).

It belongs to the universal ribosomal protein uL5 family.

Its subcellular location is the mitochondrion. The chain is Large ribosomal subunit protein uL5m (RPL5) from Brassica napus (Rape).